A 1311-amino-acid polypeptide reads, in one-letter code: Stress response protein NST1 (1311 aa).

Disordered regions lie at residues 1 to 226, 308 to 379, 478 to 521, 542 to 576, and 613 to 1083; these read MKGN…QEER, LGPT…RQRP, NGNN…VQTN, SASADDGSYQDHGQESHAKQHRHLQDSMTEEQRME, and ELAQ…NLEE. The span at 8–27 shows a compositional bias: low complexity; that stretch reads PAVASQPTSPASPTPSKGTS. Positions 46-58 are enriched in polar residues; that stretch reads SVETPQPSPTVSA. Positions 68–86 are enriched in low complexity; that stretch reads GQPPSTAPTAPSGSNASGG. Over residues 93–103 the composition is skewed to basic residues; it reads NRKKAKRRAKL. Residues 116 to 133 show a composition bias toward polar residues; sequence DNLSNGVAAHSASSSLPK. Basic and acidic residues predominate over residues 213–226; that stretch reads SKEKIWNTSSQEER. 2 stretches are compositionally biased toward acidic residues: residues 343-372 and 491-518; these read GDDEDDDGEDEYSEEELDDDEDYSDDEEPE and PEDDEEYEDEEEEEEYDSQDEEYDEEEV. Residues 450–521 adopt a coiled-coil conformation; sequence IEMMEQLAER…EYDEEEVQTN (72 aa). Residues 599–795 are a coiled coil; sequence REKVAKERQE…SQKATTLANV (197 aa). 2 stretches are compositionally biased toward basic and acidic residues: residues 613–682 and 689–786; these read ELAQ…NEER and QRKA…ERAS. Composition is skewed to low complexity over residues 805–829 and 891–922; these read QSQAPNPAPALPQSQQASVASPQLP and SKGSSSQGQSLHSQATSPLGTSLPTSTSLPTP. Pro residues predominate over residues 923–933; the sequence is FGMPHPPPNQH. Low complexity predominate over residues 934–945; it reads YPPGIGPLNAPP. Residues 960 to 975 are compositionally biased toward polar residues; it reads MYQQSPFGFRQATQQH. Residues 984–994 show a composition bias toward gly residues; sequence IPMGPGRGLGH. A compositionally biased stretch (polar residues) spans 1026-1038; that stretch reads PLSSHSRQASANF. Residues 1041-1052 are compositionally biased toward low complexity; it reads PIAATPIARPTP.

The protein belongs to the NST1 family.

It localises to the cytoplasm. Functionally, may act as a negative regulator of salt tolerance. In Pyricularia oryzae (strain 70-15 / ATCC MYA-4617 / FGSC 8958) (Rice blast fungus), this protein is Stress response protein NST1 (NST1).